A 121-amino-acid chain; its full sequence is MIQQESFLTVADNSGAKRIQCIRVLGTNRRYAHVGDVIVAAVKDAMPNMGVKKSDVVKAVVVRTKATLRRDTGNSIRFDDNAAVIINDDKNPKGTRVFGPVARELRERNFTKIVSLAPEVI.

It belongs to the universal ribosomal protein uL14 family. Part of the 50S ribosomal subunit. Forms a cluster with proteins L3 and L19. In the 70S ribosome, L14 and L19 interact and together make contacts with the 16S rRNA in bridges B5 and B8.

Functionally, binds to 23S rRNA. Forms part of two intersubunit bridges in the 70S ribosome. The sequence is that of Large ribosomal subunit protein uL14 from Synechococcus sp. (strain WH7803).